Consider the following 589-residue polypeptide: Chromodomain Y-like protein (589 aa).

The span at Met1–Thr10 shows a compositional bias: polar residues. Residues Met1–Val57 form a disordered region. Over residues Lys11 to Arg30 the composition is skewed to basic and acidic residues. One can recognise a Chromo domain in the interval Thr55–Thr115. The interval Thr55–Thr300 is interaction with EZH2. Residue Ser82 is modified to Phosphoserine. The interval Arg110–Ser155 is disordered. Over residues Ala117–Arg128 the composition is skewed to low complexity. Residue Lys129 is modified to N6,N6,N6-trimethyllysine; by EHMT2; alternate. Position 129 is an N6,N6-dimethyllysine; by EHMT2; alternate (Lys129). An N6-methyllysine; by EHMT2; alternate modification is found at Lys129. Polar residues predominate over residues Ser132 to Asn143. Ser164, Ser195, and Ser210 each carry phosphoserine. The tract at residues Ser202–Pro224 is disordered. Residues Phe206–Gln216 are compositionally biased toward basic and acidic residues. The interval Ser353–Lys585 is acetyl-CoA-binding domain.

As to quaternary structure, forms multimers and multimerization is required for stable binding to chromatin. Interacts with HDAC1 and HDAC2 via its C-terminal acetyl-CoA-binding domain. Interacts with EZH2, EED, SUZ12, REST, EHMT1 and EHMT2. Part of a complex containing at least CDYL, REST, WIZ, SETB1, EHMT1 and EHMT2. Part of a complex containing at least CDYL, MIER1, MIER2, HDAC1 and HDAC2. Interacts with CHAF1A and CHAF1B; bridging the CAF-1 complex to the MCM2-7 (MCM) complex. Interacts with MCM3 and MCM5; bridging the CAF-1 complex to the MCM2-7 (MCM) complex. Recruited to Xist RNA-coated X chromosome. Interacts with EHMT2 and PRDM9; interaction only takes place when PRDM9 is bound to hotspot DNA. In terms of tissue distribution, expressed in the brain, with expression in the hippocampal dentate gyrus, CA1, striatum and cortex (at protein level). Expressed in the prelimbic cortex.

The protein resides in the nucleus. It localises to the chromosome. It catalyses the reaction 3-hydroxybutanoyl-CoA = (2E)-butenoyl-CoA + H2O. Functionally, chromatin reader protein that recognizes and binds histone H3 trimethylated at 'Lys-9', dimethylated at 'Lys-27' and trimethylated at 'Lys-27' (H3K9me3, H3K27me2 and H3K27me3, respectively). Part of multimeric repressive chromatin complexes, where it is required for transmission and restoration of repressive histone marks, thereby preserving the epigenetic landscape. Required for chromatin targeting and maximal enzymatic activity of Polycomb repressive complex 2 (PRC2); acts as a positive regulator of PRC2 activity by bridging the pre-existing histone H3K27me3 and newly recruited PRC2 on neighboring nucleosomes. Acts as a corepressor for REST by facilitating histone-lysine N-methyltransferase EHMT2 recruitment and H3K9 dimethylation at REST target genes for repression. Involved in X chromosome inactivation in females: recruited to Xist RNA-coated X chromosome and facilitates propagation of H3K9me2 by anchoring EHMT2. Promotes EZH2 accumulation and H3K27me3 methylation at DNA double strand breaks (DSBs), thereby facilitating transcriptional repression at sites of DNA damage and homology-directed repair of DSBs. Required for neuronal migration during brain development by repressing expression of RHOA. By repressing the expression of SCN8A, contributes to the inhibition of intrinsic neuronal excitability and epileptogenesis. In addition to acting as a chromatin reader, acts as a hydro-lyase. Shows crotonyl-coA hydratase activity by mediating the conversion of crotonyl-CoA ((2E)-butenoyl-CoA) to beta-hydroxybutyryl-CoA (3-hydroxybutanoyl-CoA), thereby acting as a negative regulator of histone crotonylation. Histone crotonylation is required during spermatogenesis; down-regulation of histone crotonylation by CDYL regulates the reactivation of sex chromosome-linked genes in round spermatids and histone replacement in elongating spermatids. By regulating histone crotonylation and trimethylation of H3K27, may be involved in stress-induced depression-like behaviors, possibly by regulating VGF expression. Displays acetyltransferase activity toward tubulin in vitro; such activity is however unsure in vivo and additional evidences would be required to confirm this result. Its function is as follows. Not able to recognize and bind histone H3K9me3, histone H3K27me2 and histone H3K27me3, due to the presence of a N-terminal extension that inactivates the chromo domain. The protein is Chromodomain Y-like protein of Rattus norvegicus (Rat).